The sequence spans 250 residues: Adenosylcobinamide-GDP ribazoletransferase (250 aa).

The next 6 membrane-spanning stretches (helical) occupy residues 32 to 52 (KGIIYFPVVGGIIGALLMVAY), 59 to 79 (LAHSLSALLTVGFFVFLTGGL), 113 to 133 (GVLAMVFILLLKLYGIQGLGE), 136 to 156 (IYWGIILMPVMGRQAIVYGCY), 185 to 205 (LTFILAAMHLPSLIFALLLPI), and 230 to 250 (CELTEGCYLLFILLITGAGLF).

Belongs to the CobS family. Requires Mg(2+) as cofactor.

The protein localises to the cell membrane. It catalyses the reaction alpha-ribazole + adenosylcob(III)inamide-GDP = adenosylcob(III)alamin + GMP + H(+). It carries out the reaction alpha-ribazole 5'-phosphate + adenosylcob(III)inamide-GDP = adenosylcob(III)alamin 5'-phosphate + GMP + H(+). Its pathway is cofactor biosynthesis; adenosylcobalamin biosynthesis; adenosylcobalamin from cob(II)yrinate a,c-diamide: step 7/7. Joins adenosylcobinamide-GDP and alpha-ribazole to generate adenosylcobalamin (Ado-cobalamin). Also synthesizes adenosylcobalamin 5'-phosphate from adenosylcobinamide-GDP and alpha-ribazole 5'-phosphate. The sequence is that of Adenosylcobinamide-GDP ribazoletransferase from Alkaliphilus metalliredigens (strain QYMF).